A 2477-amino-acid polypeptide reads, in one-letter code: Non-reducing polyketide synthase mapC (2477 aa).

The interval 14–269 is N-terminal acylcarrier protein transacylase domain (SAT); it reads LLFGPQCSEI…HQQTHREGIQ (256 aa). A Ketosynthase family 3 (KS3) domain is found at 403 to 820; it reads MPPIAITGMA…GSNAALIVRD (418 aa). Residues cysteine 568, histidine 703, and histidine 742 each act as for beta-ketoacyl synthase activity in the active site. Residues 930 to 1233 form a malonyl-CoA:ACP transacylase (MAT) domain region; the sequence is LCFGGQNGVT…HRVNLDGSDG (304 aa). The active-site For acyl/malonyl transferase activity is serine 1017. Residues 1302–1435 are N-terminal hotdog fold; it reads QERAGLLRKL…GSVSLCNERS (134 aa). The PKS/mFAS DH domain occupies 1302 to 1612; it reads QERAGLLRKL…FMSVSIRSLT (311 aa). Residues 1307–1611 are product template (PT) domain; the sequence is LLRKLSDGPE…RFMSVSIRSL (305 aa). Histidine 1336 acts as the Proton acceptor; for dehydratase activity in catalysis. Residues 1461–1612 are C-terminal hotdog fold; the sequence is ASNGLKGSTV…FMSVSIRSLT (152 aa). Catalysis depends on aspartate 1518, which acts as the Proton donor; for dehydratase activity. The Carrier domain occupies 1651–1725; sequence DSDLVAVQEM…GLTEHIFPGH (75 aa). Serine 1685 is subject to O-(pantetheine 4'-phosphoryl)serine. The tract at residues 1882–2117 is methyltransferase (CMeT) domain; sequence PYALEHDLLQ…GFEWVGWTNN (236 aa). Residues serine 2267 and aspartate 2421 each act as for thioesterase activity in the active site.

It localises to the cytoplasm. It is found in the cytosol. It carries out the reaction 3 malonyl-CoA + acetyl-CoA + S-adenosyl-L-methionine + H(+) = 5-methylorsellinate + S-adenosyl-L-homocysteine + 3 CO2 + 4 CoA. It functions in the pathway secondary metabolite biosynthesis; terpenoid biosynthesis. Its function is as follows. Non-reducing polyketide synthase; part of the gene cluster that mediates the biosynthesis of mycophenolic acid (MPA), the first isolated antibiotic natural product in the world obtained from a culture of Penicillium brevicompactum in 1893. MpaC catalyzes the synthesis of 5-methylorsellinic acid (5MOA) via the condensation of 1 acetyl-CoA starter unit with 3 malonyl-CoA units and one methylation step. The first step of the pathway is the synthesis of 5-methylorsellinic acid (5MOA) by the cytosolic polyketide synthase mpaC. 5MOA is then converted to the phthalide compound 5,7-dihydroxy-4,6-dimethylphthalide (DHMP) by the endoplasmic reticulum-bound cytochrome P450 monooxygenase mpaDE. MpaDE first catalyzes hydroxylation of 5-MOA to 4,6-dihydroxy-2-(hydroxymethyl)-3-methylbenzoic acid (DHMB). MpaDE then acts as a lactone synthase that catalyzes the ring closure to convert DHMB into DHMP. The next step is the prenylation of DHMP by the Golgi apparatus-associated prenyltransferase mpaA to yield farnesyl-DHMP (FDHMP). The ER-bound oxygenase mpaB then mediates the oxidative cleavage the C19-C20 double bond in FDHMP to yield FDHMP-3C via a mycophenolic aldehyde intermediate. The O-methyltransferase mpaG catalyzes the methylation of FDHMP-3C to yield MFDHMP-3C. After the cytosolic methylation of FDHMP-3C, MFDHMP-3C enters into peroxisomes probably via free diffusion due to its low molecular weight. Upon a peroxisomal CoA ligation reaction, catalyzed by a beta-oxidation component enzyme acyl-CoA ligase ACL891, MFDHMP-3C-CoA would then be restricted to peroxisomes for the following beta-oxidation pathway steps. The peroxisomal beta-oxidation machinery than converts MFDHMP-3C-CoA into MPA_CoA, via a beta-oxidation chain-shortening process. Finally mpaH acts as a peroxisomal acyl-CoA hydrolase with high substrate specificity toward MPA-CoA to release the final product MPA. This is Non-reducing polyketide synthase mapC from Penicillium roqueforti (strain FM164).